The chain runs to 117 residues: Cuticle protein CP1246 (117 aa).

Tandem repeats lie at residues 1–17 (NYGE…LVQF), 26–43 (AEIG…HVQF), 67–84 (QSYG…NRQF), and 93–110 (VLVG…NVQF).

Calcified shell.

The chain is Cuticle protein CP1246 from Cancer pagurus (Rock crab).